The primary structure comprises 322 residues: 4-hydroxythreonine-4-phosphate dehydrogenase (322 aa).

The substrate site is built by histidine 131 and threonine 132. A divalent metal cation-binding residues include histidine 161, histidine 206, and histidine 259. Substrate-binding residues include lysine 267, asparagine 276, and arginine 285.

The protein belongs to the PdxA family. Homodimer. A divalent metal cation is required as a cofactor.

It localises to the cytoplasm. It carries out the reaction 4-(phosphooxy)-L-threonine + NAD(+) = 3-amino-2-oxopropyl phosphate + CO2 + NADH. It participates in cofactor biosynthesis; pyridoxine 5'-phosphate biosynthesis; pyridoxine 5'-phosphate from D-erythrose 4-phosphate: step 4/5. In terms of biological role, catalyzes the NAD(P)-dependent oxidation of 4-(phosphooxy)-L-threonine (HTP) into 2-amino-3-oxo-4-(phosphooxy)butyric acid which spontaneously decarboxylates to form 3-amino-2-oxopropyl phosphate (AHAP). This is 4-hydroxythreonine-4-phosphate dehydrogenase from Sulfurihydrogenibium sp. (strain YO3AOP1).